A 236-amino-acid polypeptide reads, in one-letter code: Dolichol-phosphate mannosyltransferase (236 aa).

GDP-alpha-D-mannose-binding residues include Pro9, Tyr11, Glu13, Ile40, Asp42, Asp95, Ala96, Asp97, Arg124, Val160, Arg211, and Lys217. Residue Asp97 participates in Mg(2+) binding. Residue Asp97 coordinates Mn(2+).

Belongs to the glycosyltransferase 2 family. As to quaternary structure, component of the dolichol-phosphate mannose (DPM) synthase complex composed of dpm1, dpm2 and dpm3. The cofactor is Mg(2+). Requires Mn(2+) as cofactor. It depends on Ca(2+) as a cofactor.

The protein localises to the endoplasmic reticulum. The catalysed reaction is a di-trans,poly-cis-dolichyl phosphate + GDP-alpha-D-mannose = a di-trans,poly-cis-dolichyl beta-D-mannosyl phosphate + GDP. The protein operates within protein modification; protein glycosylation. Transfers mannose from GDP-mannose to dolichol monophosphate to form dolichol phosphate mannose (Dol-P-Man) which is the mannosyl donor in pathways leading to N-glycosylation, glycosyl phosphatidylinositol membrane anchoring, and O-mannosylation of proteins. This chain is Dolichol-phosphate mannosyltransferase, found in Schizosaccharomyces pombe (strain 972 / ATCC 24843) (Fission yeast).